A 112-amino-acid polypeptide reads, in one-letter code: Photosystem II reaction center Psb28 protein (112 aa).

It belongs to the Psb28 family. In terms of assembly, part of the photosystem II complex.

It localises to the plastid. The protein localises to the cyanelle thylakoid membrane. The chain is Photosystem II reaction center Psb28 protein from Cyanophora paradoxa.